Reading from the N-terminus, the 70-residue chain is DNA gyrase inhibitor YacG (70 aa).

The Zn(2+) site is built by Cys21, Cys24, Cys36, and Cys40.

The protein belongs to the DNA gyrase inhibitor YacG family. In terms of assembly, interacts with GyrB. The cofactor is Zn(2+).

In terms of biological role, inhibits all the catalytic activities of DNA gyrase by preventing its interaction with DNA. Acts by binding directly to the C-terminal domain of GyrB, which probably disrupts DNA binding by the gyrase. In Sinorhizobium medicae (strain WSM419) (Ensifer medicae), this protein is DNA gyrase inhibitor YacG.